A 629-amino-acid polypeptide reads, in one-letter code: DNA topoisomerase 4 subunit B (629 aa).

ATP contacts are provided by residues Tyr4, Asn41, Asp68, 109–115 (GLHGVGI), and Lys333. One can recognise a Toprim domain in the interval 411 to 524 (AELFLVEGDS…AGHVYVAMPP (114 aa)). Mg(2+)-binding residues include Glu417, Asp489, and Asp491.

This sequence belongs to the type II topoisomerase family. ParE type 1 subfamily. As to quaternary structure, heterotetramer composed of ParC and ParE. The cofactor is Mg(2+). It depends on Mn(2+) as a cofactor. Ca(2+) is required as a cofactor.

It carries out the reaction ATP-dependent breakage, passage and rejoining of double-stranded DNA.. Functionally, topoisomerase IV is essential for chromosome segregation. It relaxes supercoiled DNA. Performs the decatenation events required during the replication of a circular DNA molecule. The chain is DNA topoisomerase 4 subunit B from Pseudomonas aeruginosa (strain ATCC 15692 / DSM 22644 / CIP 104116 / JCM 14847 / LMG 12228 / 1C / PRS 101 / PAO1).